The chain runs to 250 residues: UPF0758 protein RPB_0700 (250 aa).

Residues 1–27 form a disordered region; sequence MVDPISNAAPPMPADSSERLDPPGFAE. Residues 128 to 250 form the MPN domain; sequence VLSSWSAVID…HASLKGLKLF (123 aa). Residues His-199, His-201, and Asp-212 each coordinate Zn(2+). A JAMM motif motif is present at residues 199-212; the sequence is HNHPSGDPTPSQAD.

This sequence belongs to the UPF0758 family.

This Rhodopseudomonas palustris (strain HaA2) protein is UPF0758 protein RPB_0700.